Consider the following 476-residue polypeptide: Glutamate--tRNA ligase (476 aa).

The 'HIGH' region signature appears at 9–19 (PSPTGTLHLGT). Residues 248 to 252 (KLSKR) carry the 'KMSKS' region motif. An ATP-binding site is contributed by Lys-251.

Belongs to the class-I aminoacyl-tRNA synthetase family. Glutamate--tRNA ligase type 1 subfamily. Monomer.

It localises to the cytoplasm. The catalysed reaction is tRNA(Glu) + L-glutamate + ATP = L-glutamyl-tRNA(Glu) + AMP + diphosphate. Functionally, catalyzes the attachment of glutamate to tRNA(Glu) in a two-step reaction: glutamate is first activated by ATP to form Glu-AMP and then transferred to the acceptor end of tRNA(Glu). The polypeptide is Glutamate--tRNA ligase (Prochlorococcus marinus (strain NATL2A)).